The chain runs to 365 residues: Alanine racemase (365 aa).

The active-site Proton acceptor; specific for D-alanine is the lysine 32. At lysine 32 the chain carries N6-(pyridoxal phosphate)lysine. Residue arginine 128 participates in substrate binding. Tyrosine 257 acts as the Proton acceptor; specific for L-alanine in catalysis. Methionine 305 serves as a coordination point for substrate.

It belongs to the alanine racemase family. The cofactor is pyridoxal 5'-phosphate.

It carries out the reaction L-alanine = D-alanine. The protein operates within amino-acid biosynthesis; D-alanine biosynthesis; D-alanine from L-alanine: step 1/1. Functionally, catalyzes the interconversion of L-alanine and D-alanine. May also act on other amino acids. The polypeptide is Alanine racemase (alr) (Francisella tularensis subsp. holarctica (strain OSU18)).